The sequence spans 502 residues: Bone morphogenetic protein receptor type-1B (502 aa).

The first 13 residues, 1–13, serve as a signal peptide directing secretion; it reads MLLRSSGKLNVGT. Residues 1–24 are disordered; the sequence is MLLRSSGKLNVGTKKEDGESTAPT. The Extracellular portion of the chain corresponds to 14 to 126; that stretch reads KKEDGESTAP…DFVDGPIHHK (113 aa). 5 disulfide bridges follow: C32–C53, C34–C38, C47–C71, C81–C95, and C96–C102. The helical transmembrane segment at 127–148 threads the bilayer; the sequence is ALLISVTVCSLLLVLIILFCYF. Residues 149–502 lie on the Cytoplasmic side of the membrane; that stretch reads RYKRQEARPR…KMSESQDIKL (354 aa). Residues 174–203 form the GS domain; sequence ESLRDLIEQSQSSGSGSGLPLLVQRTIAKQ. Positions 204–494 constitute a Protein kinase domain; the sequence is IQMVKQIGKG…LRVKKTLAKM (291 aa). ATP-binding positions include 210-218 and K231; that span reads IGKGRYGEV. Residue D332 is the Proton acceptor of the active site.

It belongs to the protein kinase superfamily. TKL Ser/Thr protein kinase family. TGFB receptor subfamily. Interacts with high affinity with GDF5; positively regulates chondrocyte differentiation. Interacts with SCUBE3. Interacts with TSC22D1/TSC-22. Interacts with TGFBR3. The cofactor is Mg(2+). It depends on Mn(2+) as a cofactor. Post-translationally, autophosphorylated.

Its subcellular location is the cell membrane. The catalysed reaction is L-threonyl-[receptor-protein] + ATP = O-phospho-L-threonyl-[receptor-protein] + ADP + H(+). The enzyme catalyses L-seryl-[receptor-protein] + ATP = O-phospho-L-seryl-[receptor-protein] + ADP + H(+). Functionally, on ligand binding, forms a receptor complex consisting of two type II and two type I transmembrane serine/threonine kinases. Type II receptors phosphorylate and activate type I receptors which autophosphorylate, then bind and activate SMAD transcriptional regulators. Receptor for BMP7/OP-1. Receptor for GDF5. Positively regulates chondrocyte differentiation through GDF5 interaction. This Mus musculus (Mouse) protein is Bone morphogenetic protein receptor type-1B (Bmpr1b).